Consider the following 449-residue polypeptide: Gamma-aminobutyric acid receptor subunit delta (449 aa).

Residues 1–24 (MDVLGWLLLPLLLLCTQPHHGARA) form the signal peptide. Residues 25-251 (MNDIGDYVGS…QLRRNRGVYI (227 aa)) lie on the Extracellular side of the membrane. N-linked (GlcNAc...) asparagine glycosylation is found at asparagine 103 and asparagine 106. A disulfide bridge connects residues cysteine 164 and cysteine 178. Residues 252-271 (IQSYMPSVLLVAMSWVSFWI) form a helical membrane-spanning segment. Residues 272 to 275 (SQAA) lie on the Cytoplasmic side of the membrane. A helical membrane pass occupies residues 276–298 (VPARVSLGITTVLTMTTLMVSAR). Residues 299–308 (SSLPRASAIK) lie on the Extracellular side of the membrane. The chain crosses the membrane as a helical span at residues 309–331 (ALDVYFWICYVFVFAALVEYAFA). Topologically, residues 332–423 (HFNADYRKKR…SRLKPIDADT (92 aa)) are cytoplasmic. Serine 390 carries the phosphoserine modification. A helical transmembrane segment spans residues 424–446 (IDIYARAVFPAAFAAVNIIYWAA). The Extracellular portion of the chain corresponds to 447–449 (YTM).

The protein belongs to the ligand-gated ion channel (TC 1.A.9) family. Gamma-aminobutyric acid receptor (TC 1.A.9.5) subfamily. GABRD sub-subfamily. Heteropentamer, formed by a combination of alpha (GABRA1-6), beta (GABRB1-3), gamma (GABRG1-3), delta (GABRD), epsilon (GABRE), rho (GABRR1-3), pi (GABRP) and theta (GABRQ) chains, each subunit exhibiting distinct physiological and pharmacological properties.

The protein localises to the cell membrane. It catalyses the reaction chloride(in) = chloride(out). Delta subunit of the heteropentameric ligand-gated chloride channel gated by gamma-aminobutyric acid (GABA), a major inhibitory neurotransmitter in the brain. GABA-gated chloride channels, also named GABA(A) receptors (GABAAR), consist of five subunits arranged around a central pore and contain GABA active binding site(s) located at the alpha and beta subunit interface(s). When activated by GABA, GABAARs selectively allow the flow of chloride anions across the cell membrane down their electrochemical gradient. GABAARs containing delta/GABRD subunits are predominantly expressed and located in extrasynaptic or perisynaptic positions on hippocampus and cerebellar granule cells, and contribute to the tonic GABAergic inhibition. GABAAR containing alpha-4-beta-3-delta subunits can simultaneously bind GABA and histamine where histamine binds at the interface of two neighboring beta subunits, which may be involved in the regulation of sleep and wakefulness. The protein is Gamma-aminobutyric acid receptor subunit delta of Mus musculus (Mouse).